Consider the following 315-residue polypeptide: Acetaldehyde dehydrogenase (315 aa).

13 to 16 (SGNI) is a binding site for NAD(+). The active-site Acyl-thioester intermediate is the C131. Residues 163–171 (SAGPGTRAN) and N290 contribute to the NAD(+) site.

The protein belongs to the acetaldehyde dehydrogenase family.

The catalysed reaction is acetaldehyde + NAD(+) + CoA = acetyl-CoA + NADH + H(+). The polypeptide is Acetaldehyde dehydrogenase (Xanthobacter autotrophicus (strain ATCC BAA-1158 / Py2)).